Here is a 420-residue protein sequence, read N- to C-terminus: ATP-dependent Clp protease ATP-binding subunit ClpX (420 aa).

In terms of domain architecture, ClpX-type ZB spans 4 to 57 (KTPGNNGKQKLFCSFCGKEQDAVKRLVAGPGVYICDECISLCNEIIAEDHEHSH). Zn(2+) contacts are provided by C16, C19, C38, and C41. 122–129 (PTGSGKTL) contributes to the ATP binding site.

It belongs to the ClpX chaperone family. As to quaternary structure, component of the ClpX-ClpP complex. Forms a hexameric ring that, in the presence of ATP, binds to fourteen ClpP subunits assembled into a disk-like structure with a central cavity, resembling the structure of eukaryotic proteasomes.

ATP-dependent specificity component of the Clp protease. It directs the protease to specific substrates. Can perform chaperone functions in the absence of ClpP. This chain is ATP-dependent Clp protease ATP-binding subunit ClpX, found in Leptospira interrogans serogroup Icterohaemorrhagiae serovar copenhageni (strain Fiocruz L1-130).